A 145-amino-acid polypeptide reads, in one-letter code: Small ribosomal subunit protein uS19 (145 aa).

N-acetylalanine is present on A2. A Glycyl lysine isopeptide (Lys-Gly) (interchain with G-Cter in SUMO2) cross-link involves residue K108.

It belongs to the universal ribosomal protein uS19 family. In terms of assembly, component of the small ribosomal subunit.

The protein localises to the cytoplasm. Its function is as follows. Component of the small ribosomal subunit. The ribosome is a large ribonucleoprotein complex responsible for the synthesis of proteins in the cell. The polypeptide is Small ribosomal subunit protein uS19 (RPS15) (Oryctolagus cuniculus (Rabbit)).